The sequence spans 529 residues: GMP synthase [glutamine-hydrolyzing] (529 aa).

Residues 9–211 (RILILDFGSQ…VKDICGCECL (203 aa)) enclose the Glutamine amidotransferase type-1 domain. C86 acts as the Nucleophile in catalysis. Catalysis depends on residues H185 and E187. One can recognise a GMPS ATP-PPase domain in the interval 212–404 (WTPATIIDDA…LGLPYDMLYR (193 aa)). 239–245 (SGGVDSS) lines the ATP pocket.

As to quaternary structure, homodimer.

The catalysed reaction is XMP + L-glutamine + ATP + H2O = GMP + L-glutamate + AMP + diphosphate + 2 H(+). Its pathway is purine metabolism; GMP biosynthesis; GMP from XMP (L-Gln route): step 1/1. In terms of biological role, catalyzes the synthesis of GMP from XMP. The polypeptide is GMP synthase [glutamine-hydrolyzing] (Aeromonas hydrophila subsp. hydrophila (strain ATCC 7966 / DSM 30187 / BCRC 13018 / CCUG 14551 / JCM 1027 / KCTC 2358 / NCIMB 9240 / NCTC 8049)).